Here is a 390-residue protein sequence, read N- to C-terminus: MKFVDEASILVVAGDGGNGCVSFRREKYIPKGGPDGGDGGDGGDVWMEADENLNTLIDYRFEKSFRAERGQNGASRDCTGKRGKDVTIKVPVGTRVIDQGTGETMGDMTKHGQRLLVAKGGWHGLGNTRFKSSVNRTPRQKTNGTPGDKRELLLELMLLADVGMLGMPNAGKSTFIRAVSAAKPKVADYPFTTLVPSLGVVRMDNEKSFVVADIPGLIEGAAEGAGLGIRFLKHLERCRVLLHLIDIDPIDGTDPVENARIIISELEKYSQDLAAKPRWLVFNKIDLLDKVEAEEKAKAIAEALGWEDKYYLISAASGLGVKDLCWDVMTFIIENPVVQAEEAKQPEKVEFMWDDYHRQQLEEIAEEDDEDWDDDWDEDDEEGVEFIYKR.

The Obg domain occupies M1 to L159. The segment at N127 to G147 is disordered. The span at R129 to T145 shows a compositional bias: polar residues. The region spanning A160 to I333 is the OBG-type G domain. Residues G166 to S173, F191 to V195, D213 to G216, N283 to D286, and S314 to A316 contribute to the GTP site. 2 residues coordinate Mg(2+): S173 and T193.

The protein belongs to the TRAFAC class OBG-HflX-like GTPase superfamily. OBG GTPase family. As to quaternary structure, monomer. Mg(2+) serves as cofactor.

It is found in the cytoplasm. An essential GTPase which binds GTP, GDP and possibly (p)ppGpp with moderate affinity, with high nucleotide exchange rates and a fairly low GTP hydrolysis rate. Plays a role in control of the cell cycle, stress response, ribosome biogenesis and in those bacteria that undergo differentiation, in morphogenesis control. This Escherichia coli O157:H7 protein is GTPase Obg.